We begin with the raw amino-acid sequence, 142 residues long: Large ribosomal subunit protein uL16 (142 aa).

It belongs to the universal ribosomal protein uL16 family. In terms of assembly, part of the 50S ribosomal subunit.

Binds 23S rRNA and is also seen to make contacts with the A and possibly P site tRNAs. The polypeptide is Large ribosomal subunit protein uL16 (Gemmatimonas aurantiaca (strain DSM 14586 / JCM 11422 / NBRC 100505 / T-27)).